Consider the following 467-residue polypeptide: Glutamate--tRNA ligase (467 aa).

The 'HIGH' region motif lies at P9 to G19. Positions K237–R241 match the 'KMSKS' region motif. K240 is an ATP binding site.

This sequence belongs to the class-I aminoacyl-tRNA synthetase family. Glutamate--tRNA ligase type 1 subfamily. In terms of assembly, monomer.

Its subcellular location is the cytoplasm. It catalyses the reaction tRNA(Glu) + L-glutamate + ATP = L-glutamyl-tRNA(Glu) + AMP + diphosphate. In terms of biological role, catalyzes the attachment of glutamate to tRNA(Glu) in a two-step reaction: glutamate is first activated by ATP to form Glu-AMP and then transferred to the acceptor end of tRNA(Glu). This chain is Glutamate--tRNA ligase, found in Xylella fastidiosa (strain M12).